Consider the following 168-residue polypeptide: Peptide deformylase (168 aa).

Positions 91 and 133 each coordinate Fe cation. Glutamate 134 is an active-site residue. Position 137 (histidine 137) interacts with Fe cation.

The protein belongs to the polypeptide deformylase family. Fe(2+) is required as a cofactor.

It catalyses the reaction N-terminal N-formyl-L-methionyl-[peptide] + H2O = N-terminal L-methionyl-[peptide] + formate. Removes the formyl group from the N-terminal Met of newly synthesized proteins. Requires at least a dipeptide for an efficient rate of reaction. N-terminal L-methionine is a prerequisite for activity but the enzyme has broad specificity at other positions. The sequence is that of Peptide deformylase from Endomicrobium trichonymphae.